The following is a 262-amino-acid chain: 2-aminoethylphosphonate dioxygenase (262 aa).

Lysine 108 lines the 2-oxoglutarate pocket. 3 residues coordinate Fe cation: histidine 118, aspartate 120, and histidine 198.

Belongs to the PhyH family. Fe(2+) is required as a cofactor.

The catalysed reaction is (2-aminoethyl)phosphonate + 2-oxoglutarate + O2 = (1R)-(2-amino-1-hydroxyethyl)phosphonate + succinate + CO2. Activity is enhanced by ascorbate. In terms of biological role, involved in the degradation of the organophosphonate 2-aminoethylphosphonic acid (2-AEP). Catalyzes the hydroxylation of 2-aminoethylphosphonic acid to yield (2-amino-1-hydroxyethyl)phosphonic acid. In Uncultured bacterium HF130_AEPn_1, this protein is 2-aminoethylphosphonate dioxygenase.